The sequence spans 507 residues: Histidine ammonia-lyase (507 aa).

Positions 141–143 (ASG) form a cross-link, 5-imidazolinone (Ala-Gly). The residue at position 142 (Ser142) is a 2,3-didehydroalanine (Ser).

This sequence belongs to the PAL/histidase family. Contains an active site 4-methylidene-imidazol-5-one (MIO), which is formed autocatalytically by cyclization and dehydration of residues Ala-Ser-Gly.

It localises to the cytoplasm. It carries out the reaction L-histidine = trans-urocanate + NH4(+). It functions in the pathway amino-acid degradation; L-histidine degradation into L-glutamate; N-formimidoyl-L-glutamate from L-histidine: step 1/3. In Burkholderia pseudomallei (strain 668), this protein is Histidine ammonia-lyase.